Reading from the N-terminus, the 229-residue chain is Urease accessory protein UreG (229 aa).

A compositionally biased stretch (basic and acidic residues) spans 1–15 (MPPHFIDGEPHDHQH). A disordered region spans residues 1–20 (MPPHFIDGEPHDHQHDRPRR). 34–41 (GPVGSGKT) provides a ligand contact to GTP.

This sequence belongs to the SIMIBI class G3E GTPase family. UreG subfamily. In terms of assembly, homodimer. UreD, UreF and UreG form a complex that acts as a GTP-hydrolysis-dependent molecular chaperone, activating the urease apoprotein by helping to assemble the nickel containing metallocenter of UreC. The UreE protein probably delivers the nickel.

It localises to the cytoplasm. In terms of biological role, facilitates the functional incorporation of the urease nickel metallocenter. This process requires GTP hydrolysis, probably effectuated by UreG. In Rhodococcus jostii (strain RHA1), this protein is Urease accessory protein UreG.